A 417-amino-acid polypeptide reads, in one-letter code: Serine hydroxymethyltransferase (417 aa).

Residues Leu121 and 125–127 contribute to the (6S)-5,6,7,8-tetrahydrofolate site; that span reads GHL. Lys229 bears the N6-(pyridoxal phosphate)lysine mark. Residue 355–357 coordinates (6S)-5,6,7,8-tetrahydrofolate; the sequence is SPF.

The protein belongs to the SHMT family. As to quaternary structure, homodimer. It depends on pyridoxal 5'-phosphate as a cofactor.

It localises to the cytoplasm. The catalysed reaction is (6R)-5,10-methylene-5,6,7,8-tetrahydrofolate + glycine + H2O = (6S)-5,6,7,8-tetrahydrofolate + L-serine. Its pathway is one-carbon metabolism; tetrahydrofolate interconversion. The protein operates within amino-acid biosynthesis; glycine biosynthesis; glycine from L-serine: step 1/1. Catalyzes the reversible interconversion of serine and glycine with tetrahydrofolate (THF) serving as the one-carbon carrier. This reaction serves as the major source of one-carbon groups required for the biosynthesis of purines, thymidylate, methionine, and other important biomolecules. Also exhibits THF-independent aldolase activity toward beta-hydroxyamino acids, producing glycine and aldehydes, via a retro-aldol mechanism. The protein is Serine hydroxymethyltransferase of Shewanella baltica (strain OS223).